Consider the following 258-residue polypeptide: uncharacterized protein (258 aa).

NADP(+) is bound by residues I17, D53, N80, R113, Y145, K149, I178, and S180. The Proton donor role is filled by Y145. K149 acts as the Lowers pKa of active site Tyr in catalysis.

Belongs to the short-chain dehydrogenases/reductases (SDR) family.

Its subcellular location is the cytoplasm. It is found in the nucleus. This is an uncharacterized protein from Schizosaccharomyces pombe (strain 972 / ATCC 24843) (Fission yeast).